The sequence spans 293 residues: uncharacterized protein (293 aa).

This is an uncharacterized protein from Acanthamoeba polyphaga (Amoeba).